A 333-amino-acid polypeptide reads, in one-letter code: 4-hydroxyproline epimerase (333 aa).

The active-site Proton acceptor is the Cys-90. Substrate is bound by residues 91 to 92 (GH) and Asp-249. Catalysis depends on Cys-253, which acts as the Proton donor. Residue 254–255 (GT) coordinates substrate.

Belongs to the proline racemase family. Homodimer.

It catalyses the reaction trans-4-hydroxy-L-proline = cis-4-hydroxy-D-proline. Its function is as follows. Allows intracellular utilization of 4-hydroxyproline, one of the major constituents of host collagen, by converting 4-hydroxy-L-proline to 4-hydroxy-D-proline, which can be further metabolized by intracellular 4-hydroxy-D-proline oxidases. Strong B-cell mitogen. Plays an important role in the regulation of intra- and extracellular amino acid pools, allowing the bacterium to profit from host precursors and enzymatic pathways. This chain is 4-hydroxyproline epimerase, found in Brucella canis (strain ATCC 23365 / NCTC 10854 / RM-666).